The chain runs to 84 residues: Large ribosomal subunit protein bL27 (84 aa).

The segment at 1 to 21 (MAHKKGGGSTKNGRDSNPKYL) is disordered.

Belongs to the bacterial ribosomal protein bL27 family.

The chain is Large ribosomal subunit protein bL27 from Chlorobium phaeovibrioides (strain DSM 265 / 1930) (Prosthecochloris vibrioformis (strain DSM 265)).